Consider the following 250-residue polypeptide: 5-oxoprolinase subunit A (250 aa).

It belongs to the LamB/PxpA family. Forms a complex composed of PxpA, PxpB and PxpC.

It catalyses the reaction 5-oxo-L-proline + ATP + 2 H2O = L-glutamate + ADP + phosphate + H(+). In terms of biological role, catalyzes the cleavage of 5-oxoproline to form L-glutamate coupled to the hydrolysis of ATP to ADP and inorganic phosphate. The sequence is that of 5-oxoprolinase subunit A from Streptomyces avermitilis (strain ATCC 31267 / DSM 46492 / JCM 5070 / NBRC 14893 / NCIMB 12804 / NRRL 8165 / MA-4680).